The sequence spans 219 residues: Small ribosomal subunit protein uS5 (219 aa).

The span at 1-21 (MTDQNQKANQGNGLQTTNLQA) shows a compositional bias: polar residues. The interval 1-61 (MTDQNQKANQ…NQNRRFQKPA (61 aa)) is disordered. Over residues 35–47 (GIKKAVSKKEGGG) the composition is skewed to basic and acidic residues. The region spanning 66-129 (FEERIVKLKR…KAAHNSLHTI (64 aa)) is the S5 DRBM domain.

It belongs to the universal ribosomal protein uS5 family. Part of the 30S ribosomal subunit. Contacts proteins S4 and S8.

Functionally, with S4 and S12 plays an important role in translational accuracy. In terms of biological role, located at the back of the 30S subunit body where it stabilizes the conformation of the head with respect to the body. This chain is Small ribosomal subunit protein uS5, found in Mycoplasma pneumoniae (strain ATCC 29342 / M129 / Subtype 1) (Mycoplasmoides pneumoniae).